The primary structure comprises 138 residues: UPF0251 protein Dole_1957 (138 aa).

This sequence belongs to the UPF0251 family.

The sequence is that of UPF0251 protein Dole_1957 from Desulfosudis oleivorans (strain DSM 6200 / JCM 39069 / Hxd3) (Desulfococcus oleovorans).